A 206-amino-acid polypeptide reads, in one-letter code: Glutathione S-transferase 1 (206 aa).

Residues 2–79 (PQYKLTYFDI…YLGRQFGLAG (78 aa)) form the GST N-terminal domain. Glutathione-binding positions include Tyr-8, Trp-39, Lys-43, 49–51 (GQL), and 63–64 (QS). In terms of domain architecture, GST C-terminal spans 81 to 206 (TPMEEAQVDS…WIAERPKTPY (126 aa)).

It belongs to the GST superfamily. Sigma family.

The catalysed reaction is RX + glutathione = an S-substituted glutathione + a halide anion + H(+). In terms of biological role, conjugation of reduced glutathione to a wide number of exogenous and endogenous hydrophobic electrophiles. Can also function as a GSH peroxidase. This Ascaris suum (Pig roundworm) protein is Glutathione S-transferase 1 (GST1).